The primary structure comprises 374 residues: Acetylxylan esterase (374 aa).

Residues 1-22 (MVFSPRLSAFVALVALTNAATA) form the signal peptide. One can recognise a CBM1 domain in the interval 23–57 (VPMYGQCGGSGYTGPTQCDPGLVCVKLNDWYSQCQ). The interval 58 to 99 (SGGAQPPVTTTSSPPVTVSPPPSTTTVAPPVATGPPAPEIPA) is ser/Thr/Pro-rich linker. Residues 60–86 (GAQPPVTTTSSPPVTVSPPPSTTTVAP) form a disordered region. Residues 63–73 (PPVTTTSSPPV) show a composition bias toward low complexity. Residues 100–374 (GQLTQLRSFG…EVVAMDFFGL (275 aa)) are catalytic. A glycan (N-linked (GlcNAc...) asparagine) is linked at Asn-114. Ser-219 serves as the catalytic Charge relay system. A glycan (N-linked (GlcNAc...) asparagine) is linked at Asn-320.

Belongs to the carbohydrate esterase 1 (CE1) family. AxeA subfamily. Monomer. Post-translationally, glycosylated.

It localises to the secreted. The enzyme catalyses Deacetylation of xylans and xylo-oligosaccharides.. It participates in glycan degradation; xylan degradation. In terms of biological role, acetylxylan esterase involved in the hydrolysis of xylan, a major structural heterogeneous polysaccharide found in plant biomass representing the second most abundant polysaccharide in the biosphere, after cellulose. Degrades acetylated xylans by cleaving acetyl side groups from the hetero-xylan backbone. In Coprinopsis cinerea (strain Okayama-7 / 130 / ATCC MYA-4618 / FGSC 9003) (Inky cap fungus), this protein is Acetylxylan esterase.